A 175-amino-acid chain; its full sequence is Avenin-like a7 (175 aa).

Residues 1 to 19 form the signal peptide; sequence MKTMFILALLAFTATSAVA.

Belongs to the prolamin family. Post-translationally, contains 7 disulfide bonds.

Seed storage protein. Not integrated in the gluten polymer through disulfide bonds, unless incorporated by reduction and reoxidation during dough making. Increases dough strength and bread volume, but decreases dough stability when added into a base wheat flour. The protein is Avenin-like a7 of Triticum aestivum (Wheat).